Here is a 5082-residue protein sequence, read N- to C-terminus: Malformin synthetase mlfA (5082 aa).

Positions 225–616 (ERHAANRPHS…CGRADTQVKL (392 aa)) are adenylation 1. Residues 749-822 (SRLEQKIQLA…EAASLAEVQE (74 aa)) form the Carrier 1 domain. Ser783 carries the O-(pantetheine 4'-phosphoryl)serine modification. The interval 860-1291 (ENVFPCTTMQ…ALNTLSLLQA (432 aa)) is condensation 1. Residues 1319-1708 (DRWVTRQPEG…GRKDTQVKLR (390 aa)) are adenylation 2. Positions 1846–1923 (TPTLELERTL…QLAAEVGEPA (78 aa)) constitute a Carrier 2 domain. Residue Ser1883 is modified to O-(pantetheine 4'-phosphoryl)serine. 2 disordered regions span residues 1924 to 1953 (GQSA…DGVD) and 1986 to 2012 (GGSS…KKNA). Low complexity-rich tracts occupy residues 1926–1950 (SASS…STND) and 1988–2005 (SSSN…SSSS). Residues 2058 to 2473 (EDIYPATALQ…AVSCSDKETL (416 aa)) form a condensation 2 region. The adenylation 3 stretch occupies residues 2496–2888 (RRTPHAPAVC…IGRRDGQLKL (393 aa)). The Carrier 3 domain occupies 3024-3100 (RPVTSQEHEM…QLICHLNTIR (77 aa)). Ser3061 carries the O-(pantetheine 4'-phosphoryl)serine modification. Condensation stretches follow at residues 3117–3582 (WVAL…TYDQ) and 3603–4022 (NIYP…EHLV). The interval 4047–4426 (HNSRQAVFDD…VGRKDNQIKF (380 aa)) is adenylation 4. The region spanning 4560-4636 (MPSTAAERKM…DLSDQAKSLI (77 aa)) is the Carrier 4 domain. Ser4597 is modified (O-(pantetheine 4'-phosphoryl)serine). The segment at 4673–5000 (DVLPTTSFQR…LQTIVQHQNN (328 aa)) is condensation 5.

This sequence belongs to the NRP synthetase family.

Its pathway is secondary metabolite biosynthesis. Nonribosomal peptide synthetase; part of the gene cluster that mediates the biosynthesis of malformins, cyclic pentapeptides with a disulfide bond between 2 consecutive cysteins, that show potential anti-tumor as well as antimalarial and antitrypanosomal properties. The nonribosomal peptide synthetase mlfA is responsible of the formation of the cyclic pentapeptide. The malformin biosynthesis clusters in malformin-producing fungi also contain enzymes involved in the formation of the disulfide bond between the two consecutive cysteins within malformins, in addition to additional tailoring enzymes such as methyltransferases or oxidoreductases. They are also composed of up to 4 major facilitator superfamily transporters, and transcription factors probably involved in the regulation of the expression of those clusters. This Aspergillus luchuensis (strain CBS 106.47) protein is Malformin synthetase mlfA.